We begin with the raw amino-acid sequence, 123 residues long: Large ribosomal subunit protein uL14 (123 aa).

The protein belongs to the universal ribosomal protein uL14 family. In terms of assembly, part of the 50S ribosomal subunit. Forms a cluster with proteins L3 and L19. In the 70S ribosome, L14 and L19 interact and together make contacts with the 16S rRNA in bridges B5 and B8.

In terms of biological role, binds to 23S rRNA. Forms part of two intersubunit bridges in the 70S ribosome. In Yersinia pestis bv. Antiqua (strain Antiqua), this protein is Large ribosomal subunit protein uL14.